We begin with the raw amino-acid sequence, 398 residues long: Enoyl-[acyl-carrier-protein] reductase [NADH] (398 aa).

Residues 48–53, 74–75, 111–112, and 139–140 each bind NAD(+); these read GASTGY, FE, DG, and LA. Tyr-225 is a substrate binding site. Tyr-235 acts as the Proton donor in catalysis. NAD(+) contacts are provided by residues Lys-244 and 273 to 275; that span reads VVT.

Belongs to the TER reductase family. As to quaternary structure, monomer.

It carries out the reaction a 2,3-saturated acyl-[ACP] + NAD(+) = a (2E)-enoyl-[ACP] + NADH + H(+). Its pathway is lipid metabolism; fatty acid biosynthesis. Its function is as follows. Involved in the final reduction of the elongation cycle of fatty acid synthesis (FAS II). Catalyzes the reduction of a carbon-carbon double bond in an enoyl moiety that is covalently linked to an acyl carrier protein (ACP). This is Enoyl-[acyl-carrier-protein] reductase [NADH] from Variovorax paradoxus (strain S110).